A 437-amino-acid polypeptide reads, in one-letter code: Transmembrane protease serine 4 (437 aa).

Over 1 to 32 (MLQDPDSDQPLNSLDVKPLRKPRIPMETFRKV) the chain is Cytoplasmic. The helical; Signal-anchor for type II membrane protein transmembrane segment at 33-53 (GIPIIIALLSLASIIIVVVLI) threads the bilayer. The Extracellular segment spans residues 54 to 437 (KVILDKYYFL…WIYNVWKAEL (384 aa)). An LDL-receptor class A domain is found at 61-93 (YFLCGQPLHFIPRKQLCDGELDCPLGEDEEHCV). Cystine bridges form between cysteine 64–cysteine 83, cysteine 77–cysteine 92, cysteine 127–cysteine 183, cysteine 140–cysteine 193, cysteine 196–cysteine 310, cysteine 230–cysteine 246, cysteine 356–cysteine 372, and cysteine 383–cysteine 410. Positions 94–204 (KSFPEGPAVA…ACGKSLKTPR (111 aa)) constitute an SRCR domain. N-linked (GlcNAc...) asparagine glycans are attached at residues asparagine 130 and asparagine 178. Residues 205–434 (VVGVEEASVD…YLNWIYNVWK (230 aa)) form the Peptidase S1 domain. Active-site charge relay system residues include histidine 245 and aspartate 290. The Charge relay system role is filled by serine 387.

The protein belongs to the peptidase S1 family. In terms of processing, proteolytically processed; probably by an autocatalytic mechanism. High levels in pancreatic, gastric, colorectal and ampullary cancer. Very weak expression in normal gastrointestinal and urogenital tract. Coexpressed with ACE2 within mature enterocytes.

It is found in the cell membrane. It localises to the secreted. Functionally, plasma membrane-anchored serine protease that directly induces processing of pro-uPA/PLAU into the active form through proteolytic activity. Seems to be capable of activating ENaC. In terms of biological role, (Microbial infection) In gut epithelial cells, facilitates human coronavirus SARS-CoV-2 infection through, at least, the cleavage of coronavirus spike glycoproteins which activates the glycoprotein for host cell entry. The chain is Transmembrane protease serine 4 from Homo sapiens (Human).